The following is a 269-amino-acid chain: Tryptophan synthase alpha chain (269 aa).

Residues glutamate 49 and aspartate 60 each act as proton acceptor in the active site.

It belongs to the TrpA family. As to quaternary structure, tetramer of two alpha and two beta chains.

It carries out the reaction (1S,2R)-1-C-(indol-3-yl)glycerol 3-phosphate + L-serine = D-glyceraldehyde 3-phosphate + L-tryptophan + H2O. Its pathway is amino-acid biosynthesis; L-tryptophan biosynthesis; L-tryptophan from chorismate: step 5/5. In terms of biological role, the alpha subunit is responsible for the aldol cleavage of indoleglycerol phosphate to indole and glyceraldehyde 3-phosphate. This chain is Tryptophan synthase alpha chain, found in Pseudomonas fluorescens (strain SBW25).